The primary structure comprises 276 residues: NADPH-dependent 7-cyano-7-deazaguanine reductase (276 aa).

83-85 contacts substrate; that stretch reads VES. 85-86 provides a ligand contact to NADPH; it reads SK. The active-site Thioimide intermediate is the Cys184. Residue Asp191 is the Proton donor of the active site. Residue 223–224 coordinates substrate; it reads HE. 252–253 provides a ligand contact to NADPH; sequence RG.

The protein belongs to the GTP cyclohydrolase I family. QueF type 2 subfamily. As to quaternary structure, homodimer.

The protein localises to the cytoplasm. It catalyses the reaction 7-aminomethyl-7-carbaguanine + 2 NADP(+) = 7-cyano-7-deazaguanine + 2 NADPH + 3 H(+). It participates in tRNA modification; tRNA-queuosine biosynthesis. Functionally, catalyzes the NADPH-dependent reduction of 7-cyano-7-deazaguanine (preQ0) to 7-aminomethyl-7-deazaguanine (preQ1). The chain is NADPH-dependent 7-cyano-7-deazaguanine reductase from Azotobacter vinelandii (strain DJ / ATCC BAA-1303).